The sequence spans 207 residues: Small ribosomal subunit protein uS4 (207 aa).

Residues 31–53 form a disordered region; it reads KAKFDSKPGQHGRTSGARTSDFG. One can recognise an S4 RNA-binding domain in the interval 97–160; the sequence is SRLDNVVYRM…KKQNRIVEAL (64 aa).

The protein belongs to the universal ribosomal protein uS4 family. In terms of assembly, part of the 30S ribosomal subunit. Contacts protein S5. The interaction surface between S4 and S5 is involved in control of translational fidelity.

One of the primary rRNA binding proteins, it binds directly to 16S rRNA where it nucleates assembly of the body of the 30S subunit. In terms of biological role, with S5 and S12 plays an important role in translational accuracy. The sequence is that of Small ribosomal subunit protein uS4 from Albidiferax ferrireducens (strain ATCC BAA-621 / DSM 15236 / T118) (Rhodoferax ferrireducens).